The primary structure comprises 349 residues: NADH-quinone oxidoreductase subunit H (349 aa).

Transmembrane regions (helical) follow at residues 14 to 34, 85 to 105, 120 to 140, 164 to 184, 196 to 216, 243 to 263, 285 to 305, and 324 to 344; these read LLVW…GCVA, GLFL…WAVI, LLYI…AGWA, MGFA…VDIV, ILSW…ISGV, GMAF…VAAL, AGGF…FLWF, and VFIP…FSPL.

Belongs to the complex I subunit 1 family. NDH-1 is composed of 14 different subunits. Subunits NuoA, H, J, K, L, M, N constitute the membrane sector of the complex.

It is found in the cell inner membrane. It carries out the reaction a quinone + NADH + 5 H(+)(in) = a quinol + NAD(+) + 4 H(+)(out). NDH-1 shuttles electrons from NADH, via FMN and iron-sulfur (Fe-S) centers, to quinones in the respiratory chain. The immediate electron acceptor for the enzyme in this species is believed to be ubiquinone. Couples the redox reaction to proton translocation (for every two electrons transferred, four hydrogen ions are translocated across the cytoplasmic membrane), and thus conserves the redox energy in a proton gradient. This subunit may bind ubiquinone. The protein is NADH-quinone oxidoreductase subunit H of Chromobacterium violaceum (strain ATCC 12472 / DSM 30191 / JCM 1249 / CCUG 213 / NBRC 12614 / NCIMB 9131 / NCTC 9757 / MK).